A 447-amino-acid chain; its full sequence is Phosphoglucosamine mutase (447 aa).

Catalysis depends on serine 104, which acts as the Phosphoserine intermediate. Mg(2+) is bound by residues serine 104, aspartate 243, aspartate 245, and aspartate 247. A Phosphoserine modification is found at serine 104.

This sequence belongs to the phosphohexose mutase family. Mg(2+) serves as cofactor. In terms of processing, activated by phosphorylation.

The enzyme catalyses alpha-D-glucosamine 1-phosphate = D-glucosamine 6-phosphate. Functionally, catalyzes the conversion of glucosamine-6-phosphate to glucosamine-1-phosphate. This chain is Phosphoglucosamine mutase, found in Corynebacterium efficiens (strain DSM 44549 / YS-314 / AJ 12310 / JCM 11189 / NBRC 100395).